The sequence spans 232 residues: Large ribosomal subunit protein uL1 (232 aa).

The protein belongs to the universal ribosomal protein uL1 family. As to quaternary structure, part of the 50S ribosomal subunit.

Functionally, binds directly to 23S rRNA. The L1 stalk is quite mobile in the ribosome, and is involved in E site tRNA release. Its function is as follows. Protein L1 is also a translational repressor protein, it controls the translation of the L11 operon by binding to its mRNA. The chain is Large ribosomal subunit protein uL1 from Francisella tularensis subsp. holarctica (strain LVS).